A 314-amino-acid chain; its full sequence is Coiled-coil domain-containing protein 42 like-2 (314 aa).

2 coiled-coil regions span residues 34–139 (RLLE…RQEK) and 175–233 (NKLL…WESR).

The protein belongs to the CFAP73 family.

The sequence is that of Coiled-coil domain-containing protein 42 like-2 from Xenopus laevis (African clawed frog).